Here is a 146-residue protein sequence, read N- to C-terminus: 3-dehydroquinate dehydratase (146 aa).

The Proton acceptor role is filled by Tyr24. The substrate site is built by Asn73, His79, and Asp86. His99 acts as the Proton donor in catalysis. Residues 100–101 and Arg110 contribute to the substrate site; that span reads LS.

This sequence belongs to the type-II 3-dehydroquinase family. In terms of assembly, homododecamer.

The catalysed reaction is 3-dehydroquinate = 3-dehydroshikimate + H2O. Its pathway is metabolic intermediate biosynthesis; chorismate biosynthesis; chorismate from D-erythrose 4-phosphate and phosphoenolpyruvate: step 3/7. Catalyzes a trans-dehydration via an enolate intermediate. The sequence is that of 3-dehydroquinate dehydratase from Shewanella baltica (strain OS195).